The chain runs to 594 residues: MKNIRNFSIIAHIDHGKSTLSDRFIQVCNGLSEREMKEQVLDSMDIERERGITIKAQSVTLDYTARDGQTYQLNFIDTPGHVDFSYEVSRSLAACEGALLVVDAAQGVEAQTVANCYTAIEQNLEVIPILNKIDLPSAEPDRVAQEIEKIIGIDATGATTCSAKIGIGVEDVLETIVAKVPAPEGDVNAKLQALIIDSWFDNYLGVVSLVRVKNGTIKKGEKFKVMSTGVAYQVDRLGVFTPKMKDLDHLKAGEVGFIVAGIKDIHGAPVGDTLTHAHNPTDKPVPGFKKVQPQVYAGMFTISSDDYPDFREALEKLSLNDASLFFEPEVSQALGFGFRCGFLGMLHMEIIQERLEREYNLDLITSAPTVVYKAIKKDGEIIEVDNLSKLPEPGAIAEIQEPIVRANILVPKDYVGSVITICIEKRGVQVDLNYVGNQVSITYDLPMIEVVSDFFDTLKSVTKGYGSLDYELIRYEPANMVCLDVLINGDKVDALASIVHKDQAKYKGRELVERLKELIPRQMFEVAIQAAIGGTIVARSTVKALRKNVLAKCYGGDVSRKKKLLEKQKEGKKRMKNIGSVEIPQEAFLSVLKK.

Positions 2–184 (KNIRNFSIIA…TIVAKVPAPE (183 aa)) constitute a tr-type G domain. Residues 14-19 (DHGKST) and 131-134 (NKID) each bind GTP.

The protein belongs to the TRAFAC class translation factor GTPase superfamily. Classic translation factor GTPase family. LepA subfamily.

It is found in the cell inner membrane. It catalyses the reaction GTP + H2O = GDP + phosphate + H(+). Functionally, required for accurate and efficient protein synthesis under certain stress conditions. May act as a fidelity factor of the translation reaction, by catalyzing a one-codon backward translocation of tRNAs on improperly translocated ribosomes. Back-translocation proceeds from a post-translocation (POST) complex to a pre-translocation (PRE) complex, thus giving elongation factor G a second chance to translocate the tRNAs correctly. Binds to ribosomes in a GTP-dependent manner. The sequence is that of Elongation factor 4 from Francisella tularensis subsp. tularensis (strain WY96-3418).